Here is a 258-residue protein sequence, read N- to C-terminus: UPF0246 protein PM0066 (258 aa).

It belongs to the UPF0246 family.

The sequence is that of UPF0246 protein PM0066 from Pasteurella multocida (strain Pm70).